The chain runs to 394 residues: Elongation factor Tu (394 aa).

A tr-type G domain is found at 10–204 (KEHANIGTIG…AVDTYIPTPE (195 aa)). The segment at 19–26 (GHVDHGKT) is G1. Residue 19-26 (GHVDHGKT) participates in GTP binding. Thr-26 is a Mg(2+) binding site. The G2 stretch occupies residues 60-64 (GITIN). Residues 81 to 84 (DCPG) are G3. GTP-binding positions include 81–85 (DCPGH) and 136–139 (NKVD). Positions 136 to 139 (NKVD) are G4. A G5 region spans residues 174 to 176 (SAL).

This sequence belongs to the TRAFAC class translation factor GTPase superfamily. Classic translation factor GTPase family. EF-Tu/EF-1A subfamily. As to quaternary structure, monomer.

The protein localises to the cytoplasm. The enzyme catalyses GTP + H2O = GDP + phosphate + H(+). In terms of biological role, GTP hydrolase that promotes the GTP-dependent binding of aminoacyl-tRNA to the A-site of ribosomes during protein biosynthesis. This is Elongation factor Tu from Staphylococcus aureus (strain COL).